The sequence spans 352 residues: Probable dual-specificity RNA methyltransferase RlmN (352 aa).

The active-site Proton acceptor is E99. The Radical SAM core domain occupies 105-339; sequence TKSRTTACVS…VTVRRSRGKD (235 aa). C112 and C344 are joined by a disulfide. Residues C119, C123, and C126 each contribute to the [4Fe-4S] cluster site. S-adenosyl-L-methionine contacts are provided by residues 170–171, S202, 225–227, and N301; these read GE and SLH. The active-site S-methylcysteine intermediate is C344.

This sequence belongs to the radical SAM superfamily. RlmN family. [4Fe-4S] cluster serves as cofactor.

It is found in the cytoplasm. It catalyses the reaction adenosine(2503) in 23S rRNA + 2 reduced [2Fe-2S]-[ferredoxin] + 2 S-adenosyl-L-methionine = 2-methyladenosine(2503) in 23S rRNA + 5'-deoxyadenosine + L-methionine + 2 oxidized [2Fe-2S]-[ferredoxin] + S-adenosyl-L-homocysteine. It carries out the reaction adenosine(37) in tRNA + 2 reduced [2Fe-2S]-[ferredoxin] + 2 S-adenosyl-L-methionine = 2-methyladenosine(37) in tRNA + 5'-deoxyadenosine + L-methionine + 2 oxidized [2Fe-2S]-[ferredoxin] + S-adenosyl-L-homocysteine. Functionally, specifically methylates position 2 of adenine 2503 in 23S rRNA and position 2 of adenine 37 in tRNAs. This is Probable dual-specificity RNA methyltransferase RlmN from Christiangramia forsetii (strain DSM 17595 / CGMCC 1.15422 / KT0803) (Gramella forsetii).